The sequence spans 46 residues: Esculentin-1GRa (46 aa).

Expressed by the skin glands.

Its subcellular location is the secreted. Antimicrobial peptide active against the Gram-positive bacterium S.aureus (MIC=12.5 uM) and against the Gram-negative bacterium E.coli (MIC=6 uM). Has no antifungal activity against C.albicans. Shows hemolytic activity against human erythrocytes only at high concentrations (LC(50)=210 uM). The protein is Esculentin-1GRa of Odorrana grahami (Yunnanfu frog).